The sequence spans 125 residues: U11-myrmicitoxin-Ta1a (125 aa).

An N-terminal signal peptide occupies residues 1-21 (MKTVIFILGFAFVAILIPTNG). The propeptide occupies 22–91 (ESMADADAMA…RAMAAAYAAA (70 aa)). Cysteine 101 and cysteine 124 form a disulfide bridge.

The protein belongs to the formicidae venom precursor-01 superfamily. In terms of tissue distribution, expressed by the venom gland.

The protein resides in the secreted. It is found in the target cell membrane. Its function is as follows. Neurotoxin that causes irreversible rapid flaccid paralysis in blowflies and honeybees upon intrathoracic injection. Causes a quick and irreversible cytolytic effect (at 10 uM) indicating it possibly acts as a pore-forming peptide. Shows only weak effect on aphids (A.pisum) at high doses 24 hours post intrathoracic injection. In vitro, is not cytotoxic on the dipteran S2 Drosophila embryonic cell line. This chain is U11-myrmicitoxin-Ta1a, found in Tetramorium africanum (Fierce ant).